Here is a 362-residue protein sequence, read N- to C-terminus: Epoxide hydrolase 4 (362 aa).

The helical; Signal-anchor for type II membrane protein transmembrane segment at 17–37 threads the bilayer; sequence SLLFWSLVYCYCGLCASIHLL. Positions 94 to 211 constitute an AB hydrolase-1 domain; the sequence is PLMLLLHGFP…EYILRHPAQL (118 aa). Residue Asp169 is the Nucleophile of the active site. Catalysis depends on Tyr281, which acts as the Proton donor. The Proton acceptor role is filled by His336.

It belongs to the AB hydrolase superfamily. Epoxide hydrolase family.

Its subcellular location is the membrane. This Homo sapiens (Human) protein is Epoxide hydrolase 4 (EPHX4).